The chain runs to 182 residues: Ribulose bisphosphate carboxylase small subunit, chloroplastic 3 (182 aa).

The transit peptide at 1-41 directs the protein to the chloroplast; the sequence is MASIMMNKSVVLSKECAKPLASPKVTLNKRGFATTIATKNR.

This sequence belongs to the RuBisCO small chain family. In terms of assembly, heterohexadecamer of 8 large and 8 small subunits.

Its subcellular location is the plastid. The protein resides in the chloroplast. Functionally, ruBisCO catalyzes two reactions: the carboxylation of D-ribulose 1,5-bisphosphate, the primary event in carbon dioxide fixation, as well as the oxidative fragmentation of the pentose substrate. Both reactions occur simultaneously and in competition at the same active site. Although the small subunit is not catalytic it is essential for maximal activity. This Acetabularia acetabulum (Mermaid's wine glass) protein is Ribulose bisphosphate carboxylase small subunit, chloroplastic 3.